Here is a 99-residue protein sequence, read N- to C-terminus: Small ribosomal subunit protein bS18 (99 aa).

The span at 1–25 (MAEDHPSVDLDTHLSSPRESEESAP) shows a compositional bias: basic and acidic residues. A disordered region spans residues 1 to 28 (MAEDHPSVDLDTHLSSPRESEESAPKKN).

This sequence belongs to the bacterial ribosomal protein bS18 family. In terms of assembly, part of the 30S ribosomal subunit. Forms a tight heterodimer with protein bS6.

Its function is as follows. Binds as a heterodimer with protein bS6 to the central domain of the 16S rRNA, where it helps stabilize the platform of the 30S subunit. This chain is Small ribosomal subunit protein bS18, found in Treponema pallidum (strain Nichols).